The chain runs to 220 residues: 2-hydroxy-3-keto-5-methylthiopentenyl-1-phosphate phosphatase (220 aa).

This sequence belongs to the HAD-like hydrolase superfamily. MtnX family.

The catalysed reaction is 2-hydroxy-5-methylsulfanyl-3-oxopent-1-enyl phosphate + H2O = 1,2-dihydroxy-5-(methylsulfanyl)pent-1-en-3-one + phosphate. Its pathway is amino-acid biosynthesis; L-methionine biosynthesis via salvage pathway; L-methionine from S-methyl-5-thio-alpha-D-ribose 1-phosphate: step 4/6. In terms of biological role, dephosphorylates 2-hydroxy-3-keto-5-methylthiopentenyl-1-phosphate (HK-MTPenyl-1-P) yielding 1,2-dihydroxy-3-keto-5-methylthiopentene (DHK-MTPene). The protein is 2-hydroxy-3-keto-5-methylthiopentenyl-1-phosphate phosphatase of Geobacillus thermodenitrificans (strain NG80-2).